The following is a 308-amino-acid chain: UDP-N-acetylenolpyruvoylglucosamine reductase (308 aa).

The region spanning 32–197 is the FAD-binding PCMH-type domain; it reads QTGGKADYYL…LEAAFTLAPG (166 aa). Residue Arg-176 is part of the active site. Ser-226 acts as the Proton donor in catalysis. Glu-296 is a catalytic residue.

This sequence belongs to the MurB family. It depends on FAD as a cofactor.

It localises to the cytoplasm. The catalysed reaction is UDP-N-acetyl-alpha-D-muramate + NADP(+) = UDP-N-acetyl-3-O-(1-carboxyvinyl)-alpha-D-glucosamine + NADPH + H(+). It participates in cell wall biogenesis; peptidoglycan biosynthesis. In terms of biological role, cell wall formation. The polypeptide is UDP-N-acetylenolpyruvoylglucosamine reductase (Staphylococcus saprophyticus subsp. saprophyticus (strain ATCC 15305 / DSM 20229 / NCIMB 8711 / NCTC 7292 / S-41)).